The sequence spans 708 residues: Polyribonucleotide nucleotidyltransferase (708 aa).

2 residues coordinate Mg(2+): Asp488 and Asp494. Residues 555 to 615 (PIIKVTKVDP…ENVDKAIELI (61 aa)) form the KH domain. Residues 625–692 (GEVLEGKVTR…DLGRLQFKRV (68 aa)) form the S1 motif domain.

Belongs to the polyribonucleotide nucleotidyltransferase family. Mg(2+) serves as cofactor.

Its subcellular location is the cytoplasm. It carries out the reaction RNA(n+1) + phosphate = RNA(n) + a ribonucleoside 5'-diphosphate. Involved in mRNA degradation. Catalyzes the phosphorolysis of single-stranded polyribonucleotides processively in the 3'- to 5'-direction. The polypeptide is Polyribonucleotide nucleotidyltransferase (Thermotoga sp. (strain RQ2)).